A 33-amino-acid chain; its full sequence is Brevinin-2HSa (33 aa).

An intrachain disulfide couples Cys-27 to Cys-33.

In terms of tissue distribution, expressed by the skin glands.

It is found in the secreted. Has antibacterial activity against the Gram-positive bacterium S.aureus ATCC 25923 (MIC=18 uM) and the Gram-negative bacterium E.coli ATCC 25726 (MIC=36 uM). This chain is Brevinin-2HSa, found in Odorrana hosii (Hose's rock frog).